A 445-amino-acid chain; its full sequence is MGESIPLAAPVPVEQAVLETFFSHLGIFSYDKAKDNVEKEREANKSAGGSWLSLLAALAHLAAAEKVYHSLTYLGQKLGGQSFFSRKDSIRTIYTSLHNELKKVVAGRGAPGGTAPHVEELLPHLSEQLCFFVQARMEIADFYEKMYALSTQKFINTEELVSTLDTILRKYSSRFHHPILSPLESSFQLEVGVLSHLLKAQAQISEWKFLPSLVTLHNAHTKLQSWGQTFEKQRETKKHLFGGQSQKAVQPPHLFLWLMKLKTMLLAKFSFYFHEALSRQTTASEMKALTAKANPDLFGKISSFIRKYDAANVSLIFDNRGSESFQGHGYHHPHSYREAPKGVDQYPAVVSLPSDRPVMHWPNVIMIMTDRASDLNSLEKVVHFYDDKVQSTYFLTRPEPHFTIVVIFESKKSERDSHFISFLNELSLALKNPKVFASLKPGSKG.

The protein belongs to the KICS2 family. As to quaternary structure, part of the KICSTOR complex composed of KPTN, ITFG2, KICS2 and SZT2. SZT2 probably serves as a link between the other three proteins in the KICSTOR complex and may mediate the direct interaction with the GATOR complex via GATOR1. The KICSTOR complex interacts directly with the GATOR1 complex and most probably indirectly with the GATOR2 complex in an amino acid-independent manner.

It localises to the lysosome membrane. In terms of biological role, as part of the KICSTOR complex functions in the amino acid-sensing branch of the TORC1 signaling pathway. Recruits, in an amino acid-independent manner, the GATOR1 complex to the lysosomal membranes and allows its interaction with GATOR2 and the RAG GTPases. Functions upstream of the RAG GTPases and is required to negatively regulate mTORC1 signaling in absence of amino acids. In absence of the KICSTOR complex mTORC1 is constitutively localized to the lysosome and activated. The KICSTOR complex is also probably involved in the regulation of mTORC1 by glucose. The sequence is that of KICSTOR subunit 2 from Mus musculus (Mouse).